A 226-amino-acid polypeptide reads, in one-letter code: N-acetylmuramic acid 6-phosphate phosphatase (226 aa).

The Nucleophile role is filled by aspartate 12. Mg(2+) contacts are provided by aspartate 12, aspartate 14, and aspartate 171. Catalysis depends on aspartate 14, which acts as the Proton donor.

It belongs to the HAD-like hydrolase superfamily. CbbY/CbbZ/Gph/YieH family. Phosphatase MupP subfamily. The cofactor is Mg(2+).

It carries out the reaction N-acetyl-D-muramate 6-phosphate + H2O = N-acetyl-D-muramate + phosphate. It participates in cell wall biogenesis; peptidoglycan recycling. Functionally, specifically catalyzes the dephosphorylation of N-acetylmuramate 6-phosphate (MurNAc-6P) to MurNac. Is involved in peptidoglycan recycling as part of a cell wall recycling pathway that bypasses de novo biosynthesis of the peptidoglycan precursor UDP-MurNAc. Plays a role in intrinsic resistance to fosfomycin, which targets the de novo synthesis of UDP-MurNAc. The protein is N-acetylmuramic acid 6-phosphate phosphatase of Pseudomonas aeruginosa (strain ATCC 15692 / DSM 22644 / CIP 104116 / JCM 14847 / LMG 12228 / 1C / PRS 101 / PAO1).